The chain runs to 434 residues: Glutamate-1-semialdehyde 2,1-aminomutase (434 aa).

The residue at position 274 (Lys274) is an N6-(pyridoxal phosphate)lysine.

It belongs to the class-III pyridoxal-phosphate-dependent aminotransferase family. HemL subfamily. As to quaternary structure, homodimer. Pyridoxal 5'-phosphate serves as cofactor.

It is found in the cytoplasm. The enzyme catalyses (S)-4-amino-5-oxopentanoate = 5-aminolevulinate. The protein operates within porphyrin-containing compound metabolism; protoporphyrin-IX biosynthesis; 5-aminolevulinate from L-glutamyl-tRNA(Glu): step 2/2. This is Glutamate-1-semialdehyde 2,1-aminomutase from Acidovorax sp. (strain JS42).